The sequence spans 267 residues: Probable ribose-5-phosphate isomerase 1 (267 aa).

Gly2 carries the N-acetylglycine modification. Phosphoserine is present on Ser92.

Belongs to the ribose 5-phosphate isomerase family. As to expression, expressed in roots, cotyledons, leaves and flowers.

Its subcellular location is the cytoplasm. The catalysed reaction is aldehydo-D-ribose 5-phosphate = D-ribulose 5-phosphate. It participates in carbohydrate degradation; pentose phosphate pathway; D-ribose 5-phosphate from D-ribulose 5-phosphate (non-oxidative stage): step 1/1. Functionally, catalyzes the reversible conversion of ribose-5-phosphate to ribulose 5-phosphate. The protein is Probable ribose-5-phosphate isomerase 1 (RPI1) of Arabidopsis thaliana (Mouse-ear cress).